We begin with the raw amino-acid sequence, 508 residues long: Immunoglobulin G-binding protein A (508 aa).

The signal sequence occupies residues 1 to 36 (MKKKNIYSIRKLGVGIASVTLGTLLISGGVTPAANA). The short motif at 7–18 (YSIRKLGVGIAS) is the YSIRK-G/S signaling motif element. The Immunoglobulin-binding region E repeat unit spans residues 37–92 (AQHDEAQQNAFYQVLNMPNLNADQRNGFIQSLKDDPSQSANVLGEAQKLNDSQAPK). An Immunoglobulin-binding region D repeat occupies 93 to 153 (ADAQQNNFNK…KKLNESQAPK (61 aa)). Residues 154–211 (ADNNFNKEQQNAFYEILNMPNLNEEQRNGFIQSLKDDPSQSANLLSEAKKLNESQAPK) form an Immunoglobulin-binding region A repeat. Residues 212–269 (ADNKFNKEQQNAFYEILHLPNLNEEQRNGFIQSLKDDPSQSANLLAEAKKLNDAQAPK) form an Immunoglobulin-binding region B repeat. The stretch at 270–327 (ADNKFNKEQQNAFYEILHLPNLTEEQRNGFIQSLKDDPSVSKEILAEAKKLNDAQAPK) is one Immunoglobulin-binding region C repeat. Over residues 318-412 (KKLNDAQAPK…GNKPGKEDGN (95 aa)) the composition is skewed to basic and acidic residues. Disordered regions lie at residues 318 to 421 (KKLN…KPGD) and 459 to 479 (KKQPANHADANKAQALPETGE). Repeat copies occupy residues 333 to 340 (KPGKEDNN), 341 to 348 (KPGKEDNN), 349 to 356 (KPGKEDNN), 357 to 364 (KPGKEDGN), 365 to 372 (KPGKEDNK), 373 to 380 (KPGKEDGN), 381 to 388 (KPGKEDNK), 389 to 396 (KPGKEDGN), 397 to 404 (KPGKEDGN), and 405 to 412 (KPGKEDGN). Residues 333 to 412 (KPGKEDNNKP…GNKPGKEDGN (80 aa)) form a 10 X 8 AA approximate tandem repeats region. Residues 413 to 457 (GVHVVKPGDTVNDIAKANGTTADKIAADNKLADKNMIKPGQELVV) enclose the LysM domain. Positions 474 to 478 (LPETG) match the LPXTG sorting signal motif. Position 477 is a pentaglycyl murein peptidoglycan amidated threonine (T477). Positions 478–508 (GEENPFIGTTVFGGLSLALGAALLAGRRREL) are cleaved as a propeptide — removed by sortase.

It belongs to the immunoglobulin-binding protein SpA family. As to quaternary structure, interacts with host TNFRSF1A; this interaction leads to the stimulation of both surface expression and shedding of TNFRSF1A.

Its subcellular location is the secreted. It localises to the cell wall. Plays a role in the inhibition of the host innate and adaptive immune responses. Possesses five immunoglobulin-binding domains that capture both the fragment crystallizable region (Fc region) and the Fab region (part of Ig that identifies antigen) of immunoglobulins. In turn, Staphylococcus aureus is protected from phagocytic killing via inhibition of Ig Fc region. In addition, the host elicited B-cell response is prevented due to a decrease of antibody-secreting cell proliferation that enter the bone marrow, thereby decreasing long-term antibody production. Inhibits osteogenesis by preventing osteoblast proliferation and expression of alkaline phosphatase, type I collagen, osteopontin and osteocalcin. Acts directly as a pro-inflammatory factor in the lung through its ability to bind and activate tumor necrosis factor alpha receptor 1/TNFRSF1A. The protein is Immunoglobulin G-binding protein A (spa) of Staphylococcus aureus (strain Newman).